The sequence spans 166 residues: Cytochrome c-type biogenesis protein CcmE (166 aa).

Residues methionine 1 to arginine 7 lie on the Cytoplasmic side of the membrane. A helical; Signal-anchor for type II membrane protein transmembrane segment spans residues leucine 8 to alanine 28. At leucine 29–tyrosine 166 the chain is on the periplasmic side. The heme site is built by histidine 122 and tyrosine 126. Positions glycine 139 to tyrosine 166 are disordered.

It belongs to the CcmE/CycJ family.

It is found in the cell inner membrane. Its function is as follows. Heme chaperone required for the biogenesis of c-type cytochromes. Transiently binds heme delivered by CcmC and transfers the heme to apo-cytochromes in a process facilitated by CcmF and CcmH. The sequence is that of Cytochrome c-type biogenesis protein CcmE from Methylocella silvestris (strain DSM 15510 / CIP 108128 / LMG 27833 / NCIMB 13906 / BL2).